Here is a 160-residue protein sequence, read N- to C-terminus: Transcriptional repressor NrdR (160 aa).

Residues 1–11 (MRCPNCNSLDT) are compositionally biased toward polar residues. A disordered region spans residues 1–20 (MRCPNCNSLDTQVKDSRPTE). Residues 3 to 34 (CPNCNSLDTQVKDSRPTEDSSVIRRRRVCIAC) fold into a zinc finger. The region spanning 49–139 (LIVIKRNGRR…VYRNFREAKD (91 aa)) is the ATP-cone domain.

The protein belongs to the NrdR family. It depends on Zn(2+) as a cofactor.

Functionally, negatively regulates transcription of bacterial ribonucleotide reductase nrd genes and operons by binding to NrdR-boxes. The protein is Transcriptional repressor NrdR of Rhodopseudomonas palustris (strain ATCC BAA-98 / CGA009).